Here is a 67-residue protein sequence, read N- to C-terminus: Conotoxin Cl14.2b (67 aa).

An N-terminal signal peptide occupies residues Met1–Gly20. A propeptide spanning residues Phe21 to Gln48 is cleaved from the precursor.

This sequence belongs to the conotoxin L superfamily. In terms of processing, contains 2 disulfide bonds. In terms of tissue distribution, expressed by the venom duct.

It localises to the secreted. Increases calcium current amplitude through Cav1.2/Cav1.3 channels in rat pancreatic beta-cells, which is a prerequisite for eliciting insulin secretion. Stimulates insulin secretion in NIT-1 insulinoma cell lines. In vivo, significantly decreases mice blood glucose levels as of 45 minutes after treatment, similarly to insulin treatment. Has a potential therapeutic use in endocrinal pathologies such as early stages of type 2 diabetes where the pancreas's capability to produce insulin is still effective. This Californiconus californicus (California cone) protein is Conotoxin Cl14.2b.